The primary structure comprises 398 residues: Chorismate synthase (398 aa).

Residues Arg-44 and Arg-50 each coordinate NADP(+). Residues 133 to 135, 261 to 262, Gly-306, 321 to 325, and Arg-347 contribute to the FMN site; these read RAS, QA, and KPIPT.

Belongs to the chorismate synthase family. Homotetramer. The cofactor is FMNH2.

The enzyme catalyses 5-O-(1-carboxyvinyl)-3-phosphoshikimate = chorismate + phosphate. It functions in the pathway metabolic intermediate biosynthesis; chorismate biosynthesis; chorismate from D-erythrose 4-phosphate and phosphoenolpyruvate: step 7/7. Functionally, catalyzes the anti-1,4-elimination of the C-3 phosphate and the C-6 proR hydrogen from 5-enolpyruvylshikimate-3-phosphate (EPSP) to yield chorismate, which is the branch point compound that serves as the starting substrate for the three terminal pathways of aromatic amino acid biosynthesis. This reaction introduces a second double bond into the aromatic ring system. In Aquifex aeolicus (strain VF5), this protein is Chorismate synthase.